The following is a 498-amino-acid chain: Glycerol kinase (498 aa).

T12 serves as a coordination point for ADP. ATP-binding residues include T12, T13, and S14. Position 12 (T12) interacts with sn-glycerol 3-phosphate. R16 lines the ADP pocket. 4 residues coordinate sn-glycerol 3-phosphate: R82, E83, Y134, and D243. Glycerol contacts are provided by R82, E83, Y134, D243, and Q244. T265 and G308 together coordinate ADP. ATP is bound by residues T265, G308, Q312, and G409. G409 and N413 together coordinate ADP.

Belongs to the FGGY kinase family. In terms of assembly, homotetramer and homodimer (in equilibrium).

The enzyme catalyses glycerol + ATP = sn-glycerol 3-phosphate + ADP + H(+). It functions in the pathway polyol metabolism; glycerol degradation via glycerol kinase pathway; sn-glycerol 3-phosphate from glycerol: step 1/1. Activated by phosphorylation and inhibited by fructose 1,6-bisphosphate (FBP). Its function is as follows. Key enzyme in the regulation of glycerol uptake and metabolism. Catalyzes the phosphorylation of glycerol to yield sn-glycerol 3-phosphate. This chain is Glycerol kinase, found in Clostridium botulinum (strain 657 / Type Ba4).